The sequence spans 143 residues: Endoribonuclease YbeY (143 aa).

Residues H109, H113, and H119 each contribute to the Zn(2+) site.

It belongs to the endoribonuclease YbeY family. Zn(2+) serves as cofactor.

The protein localises to the cytoplasm. Its function is as follows. Single strand-specific metallo-endoribonuclease involved in late-stage 70S ribosome quality control and in maturation of the 3' terminus of the 16S rRNA. The protein is Endoribonuclease YbeY of Leptospira borgpetersenii serovar Hardjo-bovis (strain JB197).